The primary structure comprises 158 residues: UPF0266 membrane protein YobD (158 aa).

Transmembrane regions (helical) follow at residues 6–26 (LVLI…QFIM), 45–65 (IDSV…VTNH), and 67–87 (ALIT…IFWI).

This sequence belongs to the UPF0266 family.

Its subcellular location is the cell inner membrane. The protein is UPF0266 membrane protein YobD of Shigella boydii serotype 4 (strain Sb227).